The following is a 95-amino-acid chain: Large ribosomal subunit protein bL25 (95 aa).

Belongs to the bacterial ribosomal protein bL25 family. Part of the 50S ribosomal subunit; part of the 5S rRNA/L5/L18/L25 subcomplex. Contacts the 5S rRNA. Binds to the 5S rRNA independently of L5 and L18.

Its function is as follows. This is one of the proteins that binds to the 5S RNA in the ribosome where it forms part of the central protuberance. This chain is Large ribosomal subunit protein bL25, found in Shewanella sediminis (strain HAW-EB3).